Consider the following 229-residue polypeptide: UPF0173 metal-dependent hydrolase RD1_1994 (229 aa).

It belongs to the UPF0173 family.

This is UPF0173 metal-dependent hydrolase RD1_1994 from Roseobacter denitrificans (strain ATCC 33942 / OCh 114) (Erythrobacter sp. (strain OCh 114)).